Consider the following 320-residue polypeptide: tRNA uridine(34) hydroxylase (320 aa).

Positions 123 to 217 constitute a Rhodanese domain; the sequence is EDENTVILDA…YGKDPETKGL (95 aa). C177 functions as the Cysteine persulfide intermediate in the catalytic mechanism.

It belongs to the TrhO family.

It catalyses the reaction uridine(34) in tRNA + AH2 + O2 = 5-hydroxyuridine(34) in tRNA + A + H2O. In terms of biological role, catalyzes oxygen-dependent 5-hydroxyuridine (ho5U) modification at position 34 in tRNAs. In Staphylococcus epidermidis (strain ATCC 35984 / DSM 28319 / BCRC 17069 / CCUG 31568 / BM 3577 / RP62A), this protein is tRNA uridine(34) hydroxylase.